The chain runs to 457 residues: Probable ubiquitin carboxyl-terminal hydrolase 16 (457 aa).

The disordered stretch occupies residues 34-97 (VSSPSVPEGT…DGANDFVDED (64 aa)). The segment covering 45-67 (TVLNNPKQSTVSRKSFSAPTSPT) has biased composition (polar residues). A Phosphoserine modification is found at Ser-61. The residue at position 64 (Thr-64) is a Phosphothreonine. Ser-65 is subject to Phosphoserine. The region spanning 125-429 (PGLVNLGNTC…QAYILQYKRK (305 aa)) is the USP domain. The active-site Nucleophile is Cys-134. The Proton acceptor role is filled by His-388. A disordered region spans residues 434-457 (SKHKLNTENTVTKTSNKKRRKISF). Over residues 448–457 (SNKKRRKISF) the composition is skewed to basic residues.

It belongs to the peptidase C19 family.

It carries out the reaction Thiol-dependent hydrolysis of ester, thioester, amide, peptide and isopeptide bonds formed by the C-terminal Gly of ubiquitin (a 76-residue protein attached to proteins as an intracellular targeting signal).. This is Probable ubiquitin carboxyl-terminal hydrolase 16 (ubp16) from Schizosaccharomyces pombe (strain 972 / ATCC 24843) (Fission yeast).